The primary structure comprises 257 residues: Receptor expression-enhancing protein 4 (257 aa).

A run of 2 helical transmembrane segments spans residues 1–21 (MVSW…YPAY) and 42–62 (WIVF…ISWF). 2 positions are modified to phosphoserine: S152 and S194. Residues 177–257 (VPRRRPPIGY…KKAMPSDMDS (81 aa)) are disordered. Position 196 is a phosphothreonine (T196). A phosphoserine mark is found at S202 and S253.

This sequence belongs to the DP1 family.

The protein resides in the endoplasmic reticulum membrane. In terms of biological role, microtubule-binding protein required to ensure proper cell division and nuclear envelope reassembly by sequestering the endoplasmic reticulum away from chromosomes during mitosis. Probably acts by clearing the endoplasmic reticulum membrane from metaphase chromosomes. This is Receptor expression-enhancing protein 4 (Reep4) from Mus musculus (Mouse).